The following is a 308-amino-acid chain: Ectoine dioxygenase (308 aa).

An L-ectoine-binding site is contributed by Gln131. Lys137 is a binding site for 2-oxoglutarate. His148, Asp150, and His249 together coordinate Fe cation.

The protein belongs to the PhyH family. EctD subfamily. Homodimer. The cofactor is Fe(2+).

It carries out the reaction L-ectoine + 2-oxoglutarate + O2 = 5-hydroxyectoine + succinate + CO2. Involved in the biosynthesis of 5-hydroxyectoine, called compatible solute, which helps organisms to survive extreme osmotic stress by acting as a highly soluble organic osmolyte. Catalyzes the 2-oxoglutarate-dependent selective hydroxylation of L-ectoine to yield (4S,5S)-5-hydroxyectoine. The sequence is that of Ectoine dioxygenase from Bordetella parapertussis (strain 12822 / ATCC BAA-587 / NCTC 13253).